The chain runs to 981 residues: Ubiquitin carboxyl-terminal hydrolase 37 (981 aa).

A KEN box 1 motif is present at residues 32–34 (KEN). 2 short sequence motifs (D-box) span residues 71–79 (RLMLTLQDN) and 96–105 (RLFLDAVHQN). The segment at 111 to 308 (MKPSQGSGSF…SAKRSLGFLP (198 aa)) is disordered. A Phosphoserine modification is found at S114. Polar residues predominate over residues 135–148 (RQLSYSDNQASSKR). The span at 149-159 (GSLETKDDIPF) shows a compositional bias: basic and acidic residues. A D-box 3 motif is present at residues 160–168 (RKVLGNPGR). At S170 the chain carries Phosphoserine. The span at 172–195 (KTATGSGITVTRTIPSLTSASTPL) shows a compositional bias: polar residues. S212 carries the phosphoserine modification. The KEN box 2 motif lies at 223–225 (KEN). Over residues 245-259 (SREKQLSLKQSEENR) the composition is skewed to basic and acidic residues. The span at 266–300 (LQSSSFYGSRTGSKDYSSGSTNLDRTNVSGQTPSA) shows a compositional bias: polar residues. The region spanning 343–953 (QGFSNLGNTC…SGYIFFYMHK (611 aa)) is the USP domain. C352 functions as the Nucleophile in the catalytic mechanism. The residue at position 630 (S630) is a Phosphoserine; by CDK2. A phosphoserine mark is found at S652 and S654. Disordered regions lie at residues 673-704 (GCEQQQDDLEKDSKPCRIEPDKSELENSGFDG) and 719-831 (KREA…EQKE). Composition is skewed to basic and acidic residues over residues 683-697 (KDSKPCRIEPDKSEL) and 719-734 (KREASPTLSHEDDDKP). Positions 706–725 (SEEELLAAVLEMSKREASPT) constitute a UIM 1 domain. At S772 the chain carries Phosphoserine. Residues 776-788 (ITKDCDENKENKT) show a composition bias toward basic and acidic residues. Positions 784–786 (KEN) match the KEN box 3 motif. UIM domains are found at residues 808–827 (REEQELQQALAQSLQEQEAW) and 830–849 (KEDDDLKRATELSLQEFNNS). A compositionally biased stretch (low complexity) spans 813–824 (LQQALAQSLQEQ). The active-site Proton acceptor is the H908.

Belongs to the peptidase C19 family. As to quaternary structure, interacts with FZR1/CDH1. Interacts with CDT1. Post-translationally, polyubiquitinated via 'Lys-11'-linked ubiquitin by the APC(CDH1) complex during late mitosis, leading to its degradation. Able to mediate auto-deubiquitination. Phosphorylated at Ser-630 by CDK2 during G1/S phase but not during mitosis; phosphorylation at Ser-630 is required for deubiquitinase activity. Also polyubiquitinated during early G1 phase, without leading to degradation. Phosphorylated at Ser-114 by ATM following DNA damage, which in turn increases its deubiquitination activity towards BLM.

It localises to the nucleus. Its subcellular location is the chromosome. The enzyme catalyses Thiol-dependent hydrolysis of ester, thioester, amide, peptide and isopeptide bonds formed by the C-terminal Gly of ubiquitin (a 76-residue protein attached to proteins as an intracellular targeting signal).. Functionally, deubiquitinase that plays a role in different processes including cell cycle regulation, DNA replication or DNA damage response. Antagonizes the anaphase-promoting complex (APC/C) during G1/S transition by mediating deubiquitination of cyclin-A (CCNA1 and CCNA2), thereby promoting S phase entry. Specifically mediates deubiquitination of 'Lys-11'-linked polyubiquitin chains, a specific ubiquitin-linkage type mediated by the APC/C complex. Phosphorylation at Ser-628 during G1/S phase maximizes the deubiquitinase activity, leading to prevent degradation of cyclin-A (CCNA1 and CCNA2). Plays an important role in the regulation of DNA replication by stabilizing the licensing factor CDT1. Also plays an essential role beyond S-phase entry to promote the efficiency and fidelity of replication by deubiquitinating checkpoint kinase 1/CHK1, promoting its stability. Sustains the DNA damage response (DDR) by deubiquitinating and stabilizing the ATP-dependent DNA helicase BLM. Mechanistically, DNA double-strand breaks (DSB) promotes ATM-mediated phosphorylation of USP37 and enhances the binding between USP37 and BLM. Promotes cell migration by deubiquitinating and stabilizing the epithelial-mesenchymal transition (EMT)-inducing transcription factor SNAI. Plays a role in the regulation of mitotic spindle assembly and mitotic progression by associating with chromatin-associated WAPL and stabilizing it through deubiquitination. This is Ubiquitin carboxyl-terminal hydrolase 37 (USP37) from Canis lupus familiaris (Dog).